Consider the following 225-residue polypeptide: Cytochrome b6-f complex iron-sulfur subunit, chloroplastic (225 aa).

The transit peptide at 1-46 (MASTALSTASNPTQLCRSRASLGKPVKGLGFGRERVPRTATTITCQ) directs the protein to the chloroplast. A helical membrane pass occupies residues 69–89 (LLGAISLPTVGMLVPYGAFFI). Positions 112–208 (AEEWLKTHGP…ADVDDGKVLF (97 aa)) constitute a Rieske domain. Residues cysteine 154, histidine 156, cysteine 172, and histidine 175 each contribute to the [2Fe-2S] cluster site. Residues cysteine 159 and cysteine 174 are joined by a disulfide bond.

It belongs to the Rieske iron-sulfur protein family. As to quaternary structure, the 4 large subunits of the cytochrome b6-f complex are cytochrome b6, subunit IV (17 kDa polypeptide, petD), cytochrome f and the Rieske protein, while the 4 small subunits are petG, petL, petM and petN. The complex functions as a dimer. The cofactor is [2Fe-2S] cluster.

The protein localises to the plastid. It localises to the chloroplast thylakoid membrane. It carries out the reaction 2 oxidized [plastocyanin] + a plastoquinol + 2 H(+)(in) = 2 reduced [plastocyanin] + a plastoquinone + 4 H(+)(out). Its function is as follows. Component of the cytochrome b6-f complex, which mediates electron transfer between photosystem II (PSII) and photosystem I (PSI), cyclic electron flow around PSI, and state transitions. The polypeptide is Cytochrome b6-f complex iron-sulfur subunit, chloroplastic (petC) (Oryza sativa subsp. japonica (Rice)).